The primary structure comprises 145 residues: Large ribosomal subunit protein bL17 (145 aa).

Belongs to the bacterial ribosomal protein bL17 family. Part of the 50S ribosomal subunit. Contacts protein L32.

This chain is Large ribosomal subunit protein bL17, found in Francisella tularensis subsp. holarctica (strain FTNF002-00 / FTA).